The sequence spans 375 residues: Glutamate 5-kinase (375 aa).

Residue Lys17 coordinates ATP. Residues Ser57, Asp144, and Asn158 each coordinate substrate. 178–179 (TD) provides a ligand contact to ATP. A PUA domain is found at 284–360 (SGSIVVDTGA…NEIADILGYK (77 aa)).

Belongs to the glutamate 5-kinase family.

The protein resides in the cytoplasm. The enzyme catalyses L-glutamate + ATP = L-glutamyl 5-phosphate + ADP. The protein operates within amino-acid biosynthesis; L-proline biosynthesis; L-glutamate 5-semialdehyde from L-glutamate: step 1/2. Catalyzes the transfer of a phosphate group to glutamate to form L-glutamate 5-phosphate. The protein is Glutamate 5-kinase of Methanococcoides burtonii (strain DSM 6242 / NBRC 107633 / OCM 468 / ACE-M).